The primary structure comprises 615 residues: Crinkler effector protein 15 (615 aa).

The signal sequence occupies residues 1 to 17; that stretch reads MVKLVCAIVGVAGSAFP. Residues 18 to 54 form an LQLFLAK domain region; it reads VDIDASQLVGDLKKAIKAENAMTFTGDAKDLQLFLAK. The segment at 55–136 is DWL domain; sequence QPVDDESGKE…NMELPSSEQI (82 aa). Residues 137–143 carry the HVLVXXP motif motif; the sequence is HVLVVVP. An N-linked (GlcNAc...) asparagine glycan is attached at N531.

Belongs to the Crinkler effector family.

It localises to the secreted. The protein resides in the host nucleus. Secreted effector that elicits necrosis in host plants, a characteristic of plant innate immunity. The polypeptide is Crinkler effector protein 15 (Phytophthora infestans (Potato late blight agent)).